The primary structure comprises 469 residues: Type II secretion system protein HxcR (469 aa).

246 to 253 (GPTGSGKT) contacts ATP.

Belongs to the GSP E family.

The protein resides in the cytoplasm. It carries out the reaction ATP + H2O + cellular proteinSide 1 = ADP + phosphate + cellular proteinSide 2.. Its function is as follows. ATPase component of the type II secretion system required for the energy-dependent secretion of extracellular factors from the periplasm. Acts as a molecular motor to provide the energy that is required for the export of proteins. The Hxc system is involved in the secretion of low-molecular-weight alkaline phosphatase L-AP (LapA). Is probably also involved in the secretion of the phosphate-binding protein PstS. The sequence is that of Type II secretion system protein HxcR from Pseudomonas aeruginosa (strain ATCC 15692 / DSM 22644 / CIP 104116 / JCM 14847 / LMG 12228 / 1C / PRS 101 / PAO1).